A 976-amino-acid chain; its full sequence is LRR receptor-like serine/threonine-protein kinase ERECTA (976 aa).

A signal peptide spans 1–24; the sequence is MALFRDIVLLGFLFCLSLVATVTS. Topologically, residues 25 to 580 are extracellular; it reads EEGATLLEIK…RRTVRVSISR (556 aa). N65 and N74 each carry an N-linked (GlcNAc...) asparagine glycan. LRR repeat units follow at residues 69–92, 93–115, 117–140, 141–163, 165–187, 189–212, 213–235, 237–259, 260–282, 284–306, 308–330, 332–355, 356–379, 380–401, 404–425, 428–449, 452–473, 476–498, 500–522, and 523–545; these read NVVALNLSDLNLDGEISPAIGDLK, SLLSIDLRGNRLSGQIPDEIGDC, SLQNLDLSFNELSGDIPFSISKLK, QLEQLILKNNQLIGPIPSTLSQI, NLKILDLAQNKLSGEIPRLIYWN, VLQYLGLRGNNLVGNISPDLCQLT, GLWYFDVRNNSLTGSIPETIGNC, AFQVLDLSYNQLTGEIPFDIGFL, QVATLSLQGNQLSGKIPSVIGLM, ALAVLDLSGNLLSGSIPPILGNL, FTEKLYLHSNKLTGSIPPELGNM, KLHYLELNDNHLTGHIPPELGKLT, DLFDLNVANNDLEGPIPDHLSSCT, NLNSLNVHGNKFSGTIPRAFQK, SMTYLNLSSNNIKGPIPVELSR, NLDTLDLSNNKINGIIPSSLGD, HLLKMNLSRNHITGVVPGDFGN, SIMEIDLSNNDISGPIPEELNQL, NIILLRLENNNLTGNVGSLANCL, and SLTVLNVSHNNLVGDIPKNNNFS. 2 N-linked (GlcNAc...) asparagine glycosylation sites follow: N221 and N234. 2 N-linked (GlcNAc...) asparagine glycosylation sites follow: N305 and N329. N409 carries an N-linked (GlcNAc...) asparagine glycan. N457 carries an N-linked (GlcNAc...) asparagine glycan. 3 N-linked (GlcNAc...) asparagine glycosylation sites follow: N510, N528, and N543. The chain crosses the membrane as a helical span at residues 581-601; sequence AAILGIAIGGLVILLMVLIAA. The Cytoplasmic portion of the chain corresponds to 602 to 976; sequence CRPHNPPPFL…FGQVISQNSE (375 aa). A Phosphothreonine modification is found at T645. The 271-residue stretch at 648 to 918 folds into the Protein kinase domain; sequence LSEKYIIGHG…QVTRVLGSFM (271 aa). ATP is bound by residues 654–662 and K676; that span reads IGHGASSTV. Y721 and Y760 each carry phosphotyrosine. The active-site Proton acceptor is D773. Y815 bears the Phosphotyrosine mark. T823 carries the phosphothreonine modification.

This sequence belongs to the protein kinase superfamily. Ser/Thr protein kinase family. Homodimer and heterodimer with ERL1 and TMM. Interacts with EPF1, EPF2, EPFL4, EPFL5 and EPFL6. Interacts with SERK1, SERK2, SERK3/BAK1 and SERK4 in a EPF2-induced manner. Interacts with EPFL9/STOMAGEN. In terms of tissue distribution, mostly expressed in shoot apical meristems (SAM), organ primordia, flowers, siliques and young rosette leaves, and, to a lower extent, in stems and cauline leaves. Expressed in growing inflorescence stems and pedicels. Detected in epidermis, phloem and xylem.

It localises to the cell membrane. It carries out the reaction L-seryl-[protein] + ATP = O-phospho-L-seryl-[protein] + ADP + H(+). The catalysed reaction is L-threonyl-[protein] + ATP = O-phospho-L-threonyl-[protein] + ADP + H(+). In terms of biological role, receptor kinase that, together with ERL1 and ERL2, regulates aerial architecture, including inflorescence (e.g. shoot apical meristem-originating organ shape, elongation of the internode and pedicels, and adaxial-abaxial polarity), and stomatal patterning (e.g. density and clustering), probably by tuning cell division and expansion. Redundantly involved with ERL1 in procambial development regulation. Forms a functional ligand-receptor pair with EPF2 (AC Q8LC53). Modulates plant transpiration efficiency by controlling stomatal density, leaf photosynthetic capacity, epidermal cell expansion, mesophyll cell proliferation and cell-cell contact. A phloem-specific expression of ER is sufficient for proper inflorescence architecture. Probable major trait regulating canalization (maintenance of phenotype despite varying environment) in many aspect of the plant physiology (e.g. plant morphology, light-dependent leaves number, branch number, flowering time, phytate and mineral concentrations) by transducing microenvironmental variation into phenotypic differentiation (ecological amplifier). May maintain development integrity in heat stress conditions. Regulates cell wall composition and structure. Confers resistance to the pathogenic bacteria Ralstonia solanacearum and to the necrotrophic fungi Plectosphaerella cucumerina and Pythium irregulare, and required for callose deposition upon infection. Resistance to P.cucumerina seems cell wall-mediated. Forms a constitutive complex with TMM involved in the recognition of the stomatal regulatory peptides EPF1, EPF2 and EPFL9/STOMAGEN. This Arabidopsis thaliana (Mouse-ear cress) protein is LRR receptor-like serine/threonine-protein kinase ERECTA.